The chain runs to 315 residues: Probable HTH-type transcriptional regulator SinR (315 aa).

The region spanning 8 to 65 (RGMRDWMIFIKVAEVGNLSRAARELDISISAVSKSLSRLENSIEVTLLRRDSHHLELT) is the HTH lysR-type domain. A DNA-binding region (H-T-H motif) is located at residues 25–44 (LSRAARELDISISAVSKSLS).

It belongs to the LysR transcriptional regulatory family.

Functionally, probable regulatory protein. Its target is not known. This is Probable HTH-type transcriptional regulator SinR (sinR) from Salmonella typhimurium (strain LT2 / SGSC1412 / ATCC 700720).